The following is a 77-amino-acid chain: Sec-independent protein translocase protein TatA (77 aa).

Residues 1 to 21 traverse the membrane as a helical segment; the sequence is MGGISIWQLLIIALIVVLLFG. Basic and acidic residues-rich tracts occupy residues 47-56 and 65-77; these read EKKALEDKEA and TEKKPEADKKEQA. A disordered region spans residues 47–77; sequence EKKALEDKEAAAQTTQQATEKKPEADKKEQA.

Belongs to the TatA/E family. The Tat system comprises two distinct complexes: a TatABC complex, containing multiple copies of TatA, TatB and TatC subunits, and a separate TatA complex, containing only TatA subunits. Substrates initially bind to the TatABC complex, which probably triggers association of the separate TatA complex to form the active translocon.

The protein localises to the cell inner membrane. In terms of biological role, part of the twin-arginine translocation (Tat) system that transports large folded proteins containing a characteristic twin-arginine motif in their signal peptide across membranes. TatA could form the protein-conducting channel of the Tat system. This is Sec-independent protein translocase protein TatA from Shewanella amazonensis (strain ATCC BAA-1098 / SB2B).